Reading from the N-terminus, the 430-residue chain is Glutamate-1-semialdehyde 2,1-aminomutase (430 aa).

An N6-(pyridoxal phosphate)lysine modification is found at Lys-265.

This sequence belongs to the class-III pyridoxal-phosphate-dependent aminotransferase family. HemL subfamily. As to quaternary structure, homodimer. Pyridoxal 5'-phosphate is required as a cofactor.

The protein resides in the cytoplasm. It carries out the reaction (S)-4-amino-5-oxopentanoate = 5-aminolevulinate. Its pathway is porphyrin-containing compound metabolism; protoporphyrin-IX biosynthesis; 5-aminolevulinate from L-glutamyl-tRNA(Glu): step 2/2. The sequence is that of Glutamate-1-semialdehyde 2,1-aminomutase from Shewanella putrefaciens (strain CN-32 / ATCC BAA-453).